A 353-amino-acid polypeptide reads, in one-letter code: Cellulose-complementing protein (353 aa).

3 disordered regions span residues 1–21 (MSASGSDEVAGGGQAGSPQDF), 75–94 (PQIAVAPPPPPVVPDPPAIV), and 117–337 (AVPA…SPRP). The segment covering 80–91 (APPPPPVVPDPP) has biased composition (pro residues). 2 stretches are compositionally biased toward low complexity: residues 117–132 (AVPAEPPVQEAPVQAA) and 142–164 (IAEQAPPAAPDPASVPYANVAAA). Residues 165-175 (PVPPDPAPVTP) are compositionally biased toward pro residues. Polar residues-rich tracts occupy residues 196–226 (QVRTVQEGATPSRVPSRSMNAFPRTSASSIS) and 278–304 (STRSVRSNVSRMTSMTKTDTNSSQASR).

The protein is Cellulose-complementing protein (ccpAX) of Komagataeibacter xylinus (Gluconacetobacter xylinus).